Here is a 112-residue protein sequence, read N- to C-terminus: Peptidyl-tRNA hydrolase (112 aa).

The protein belongs to the PTH2 family.

It is found in the cytoplasm. It catalyses the reaction an N-acyl-L-alpha-aminoacyl-tRNA + H2O = an N-acyl-L-amino acid + a tRNA + H(+). Its function is as follows. The natural substrate for this enzyme may be peptidyl-tRNAs which drop off the ribosome during protein synthesis. The polypeptide is Peptidyl-tRNA hydrolase (Methanothermobacter thermautotrophicus (strain ATCC 29096 / DSM 1053 / JCM 10044 / NBRC 100330 / Delta H) (Methanobacterium thermoautotrophicum)).